We begin with the raw amino-acid sequence, 499 residues long: Ethanolamine-phosphate phospho-lyase (499 aa).

Position 278 is an N6-(pyridoxal phosphate)lysine (K278). A compositionally biased stretch (basic and acidic residues) spans 468-479 (RDSTTDSKENPS). The segment at 468–499 (RDSTTDSKENPSRKRNGMCTDTHSLLSKRLKT) is disordered.

It belongs to the class-III pyridoxal-phosphate-dependent aminotransferase family. In terms of assembly, homotetramer. It depends on pyridoxal 5'-phosphate as a cofactor.

It localises to the mitochondrion. The catalysed reaction is phosphoethanolamine + H2O = acetaldehyde + NH4(+) + phosphate. Catalyzes the pyridoxal-phosphate-dependent breakdown of phosphoethanolamine, converting it to ammonia, inorganic phosphate and acetaldehyde. The sequence is that of Ethanolamine-phosphate phospho-lyase (ETNPPL) from Homo sapiens (Human).